The chain runs to 683 residues: Transforming growth factor-beta-induced protein ig-h3 (683 aa).

The first 23 residues, 1-23, serve as a signal peptide directing secretion; sequence MALFVRLLALALALALGPAATLA. Ser37 carries the phosphoserine modification. The 55-residue stretch at 45-99 folds into the EMI domain; the sequence is GPNVCAVQKVIGTNRKYFTNCKQWYQRKICGKSTVISYECCPGYEKVPGERSCPA. Intrachain disulfides connect Cys49–Cys85, Cys74–Cys339, Cys84–Cys97, Cys214–Cys317, and Cys473–Cys478. S-cysteinyl cysteine is present on Cys65. 4 FAS1 domains span residues 103–236, 240–371, 375–498, and 502–632; these read LANL…DKVI, TNNI…DELL, SAKT…DRML, and SGTV…TSVL. Residues 642–644 carry the Cell attachment site motif; sequence RGD.

Binds to type I, II, and IV collagens. Post-translationally, gamma-carboxylation is controversial. Gamma-carboxyglutamated; gamma-carboxyglutamate residues are formed by vitamin K dependent carboxylation; this may be required for calcium binding. According to a more recent report, does not contain vitamin K-dependent gamma-carboxyglutamate residues. The EMI domain contains 2 expected intradomain disulfide bridges (Cys-49-Cys85 and Cys-84-Cys-97) and one unusual interdomain disulfide bridge to the second FAS1 domain (Cys-74-Cys-339). This arrangement violates the predicted disulfide bridge pattern of an EMI domain. Located primarily in the epithelium of normal adult cornea, in fetal stromal cells, and both endothelium- and stroma-derived cells in healing corneal wounds. Not expressed in normal adult endothelium and stroma.

The protein localises to the secreted. It localises to the extracellular space. The protein resides in the extracellular matrix. Its function is as follows. Plays a role in cell adhesion. May play a role in cell-collagen interactions. The chain is Transforming growth factor-beta-induced protein ig-h3 (TGFBI) from Oryctolagus cuniculus (Rabbit).